Consider the following 227-residue polypeptide: Germin-like protein subfamily 3 member 2 (227 aa).

Positions 1–24 are cleaved as a signal peptide; sequence MEANTLFLLKALCLLCFNVCFTLA. A disulfide bond links cysteine 34 and cysteine 54. N-linked (GlcNAc...) asparagine glycans are attached at residues asparagine 56 and asparagine 75. Positions 68–213 constitute a Cupin type-1 domain; it reads SGLKTAGNFT…AFGLSLKQIG (146 aa). Mn(2+)-binding residues include histidine 115, histidine 117, glutamate 122, and histidine 161.

It belongs to the germin family. As to quaternary structure, oligomer (believed to be a pentamer but probably hexamer).

The protein resides in the secreted. The protein localises to the extracellular space. It is found in the apoplast. In terms of biological role, may play a role in plant defense. Probably has no oxalate oxidase activity even if the active site is conserved. This chain is Germin-like protein subfamily 3 member 2, found in Arabidopsis thaliana (Mouse-ear cress).